The sequence spans 259 residues: Global transcriptional regulator CodY (259 aa).

The GAF domain stretch occupies residues 1–155 (MTLLEKTRKI…GGTVVGMEIL (155 aa)). The segment at residues 203–222 (ASKIADRVGITRSVIVNALR) is a DNA-binding region (H-T-H motif).

It belongs to the CodY family.

It is found in the cytoplasm. Its function is as follows. DNA-binding global transcriptional regulator which is involved in the adaptive response to starvation and acts by directly or indirectly controlling the expression of numerous genes in response to nutrient availability. During rapid exponential growth, CodY is highly active and represses genes whose products allow adaptation to nutrient depletion. The chain is Global transcriptional regulator CodY from Listeria welshimeri serovar 6b (strain ATCC 35897 / DSM 20650 / CCUG 15529 / CIP 8149 / NCTC 11857 / SLCC 5334 / V8).